The sequence spans 258 residues: Large ribosomal subunit protein uL3 (258 aa).

The protein belongs to the universal ribosomal protein uL3 family. As to quaternary structure, part of the 50S ribosomal subunit. Forms a cluster with proteins L14 and L19.

One of the primary rRNA binding proteins, it binds directly near the 3'-end of the 23S rRNA, where it nucleates assembly of the 50S subunit. This chain is Large ribosomal subunit protein uL3, found in Spiroplasma kunkelii.